Consider the following 197-residue polypeptide: MAEVAQPVPAESQAKHVVYCGVCTLPPEYCEFGGTAKKCEEWLKDAHPDMYQSLYSEEALNSNLATLSVSARERAAKDAAKKEAKAAAAEARDAERKAASKVQIKRVERNKRKHVTVITGLDIYGLENKKIAKDLGKKFATGSSMTRSAGGTEEITVQGDVSDDVKEWLLEVYGKEIPEANIELIEDKKKKKATEAP.

Positions 102-173 constitute an SUI1 domain; it reads VQIKRVERNK…DVKEWLLEVY (72 aa).

The protein belongs to the DENR family. In terms of assembly, interacts with the 40S ribosomal subunit.

It localises to the cytoplasm. The protein is Translation machinery-associated protein 22 (tma22) of Aspergillus niger (strain ATCC MYA-4892 / CBS 513.88 / FGSC A1513).